A 671-amino-acid polypeptide reads, in one-letter code: DNA ligase (671 aa).

NAD(+) contacts are provided by residues 32-36 (DAEYD), 81-82 (SL), and Glu-113. Lys-115 acts as the N6-AMP-lysine intermediate in catalysis. Residues Arg-136, Glu-173, Lys-290, and Lys-314 each contribute to the NAD(+) site. Zn(2+) is bound by residues Cys-408, Cys-411, Cys-426, and Cys-432. Residues 593 to 671 (EIDSPFAGKT…EAEMLRLFGE (79 aa)) enclose the BRCT domain.

This sequence belongs to the NAD-dependent DNA ligase family. LigA subfamily. It depends on Mg(2+) as a cofactor. Mn(2+) is required as a cofactor.

The catalysed reaction is NAD(+) + (deoxyribonucleotide)n-3'-hydroxyl + 5'-phospho-(deoxyribonucleotide)m = (deoxyribonucleotide)n+m + AMP + beta-nicotinamide D-nucleotide.. In terms of biological role, DNA ligase that catalyzes the formation of phosphodiester linkages between 5'-phosphoryl and 3'-hydroxyl groups in double-stranded DNA using NAD as a coenzyme and as the energy source for the reaction. It is essential for DNA replication and repair of damaged DNA. The polypeptide is DNA ligase (Enterobacter sp. (strain 638)).